The primary structure comprises 378 residues: Queuine tRNA-ribosyltransferase (378 aa).

Catalysis depends on aspartate 89, which acts as the Proton acceptor. Residues 89–93 (DSGGF), aspartate 143, glutamine 187, and glycine 214 contribute to the substrate site. Residues 245 to 251 (GVGKPQD) are RNA binding. Residue aspartate 264 is the Nucleophile of the active site. Positions 269 to 273 (TRNAR) are RNA binding; important for wobble base 34 recognition. Cysteine 302, cysteine 304, cysteine 307, and histidine 334 together coordinate Zn(2+).

It belongs to the queuine tRNA-ribosyltransferase family. In terms of assembly, homodimer. Within each dimer, one monomer is responsible for RNA recognition and catalysis, while the other monomer binds to the replacement base PreQ1. Zn(2+) serves as cofactor.

The catalysed reaction is 7-aminomethyl-7-carbaguanine + guanosine(34) in tRNA = 7-aminomethyl-7-carbaguanosine(34) in tRNA + guanine. The protein operates within tRNA modification; tRNA-queuosine biosynthesis. Functionally, catalyzes the base-exchange of a guanine (G) residue with the queuine precursor 7-aminomethyl-7-deazaguanine (PreQ1) at position 34 (anticodon wobble position) in tRNAs with GU(N) anticodons (tRNA-Asp, -Asn, -His and -Tyr). Catalysis occurs through a double-displacement mechanism. The nucleophile active site attacks the C1' of nucleotide 34 to detach the guanine base from the RNA, forming a covalent enzyme-RNA intermediate. The proton acceptor active site deprotonates the incoming PreQ1, allowing a nucleophilic attack on the C1' of the ribose to form the product. After dissociation, two additional enzymatic reactions on the tRNA convert PreQ1 to queuine (Q), resulting in the hypermodified nucleoside queuosine (7-(((4,5-cis-dihydroxy-2-cyclopenten-1-yl)amino)methyl)-7-deazaguanosine). In Blochmanniella floridana, this protein is Queuine tRNA-ribosyltransferase.